We begin with the raw amino-acid sequence, 445 residues long: UPF0210 protein STER_0157 (445 aa).

The protein belongs to the UPF0210 family. Homodimer.

The chain is UPF0210 protein STER_0157 from Streptococcus thermophilus (strain ATCC BAA-491 / LMD-9).